The primary structure comprises 263 residues: Expansin-like A3 (263 aa).

Residues 1–20 form the signal peptide; sequence MRSFLYLIVVIFLFSSSVNA. Positions 41–147 constitute an Expansin-like EG45 domain; that stretch reads SGACAYGPMA…QRVPCNYGKR (107 aa). Residues asparagine 99 and asparagine 102 are each glycosylated (N-linked (GlcNAc...) asparagine). An Expansin-like CBD domain is found at 161-243; that stretch reads NYLAIKLLYQ…NWNSGRIYDA (83 aa).

This sequence belongs to the expansin family. Expansin-like A subfamily.

It is found in the secreted. The polypeptide is Expansin-like A3 (EXLA3) (Arabidopsis thaliana (Mouse-ear cress)).